The chain runs to 67 residues: Kappa-conotoxin-like 1 (67 aa).

The first 26 residues, 1 to 26, serve as a signal peptide directing secretion; that stretch reads MMFRLTSVSCFLLVIACLNLFQVVLT. Disulfide bonds link cysteine 29-cysteine 43, cysteine 36-cysteine 48, cysteine 42-cysteine 51, and cysteine 47-cysteine 55. Isoleucine 59 carries the isoleucine amide modification. The propeptide occupies 63–67; the sequence is ATFQE.

Belongs to the conotoxin I2 superfamily. Expressed by the venom duct.

Its subcellular location is the secreted. Inhibits the vertebrate voltage-gated potassium channels Kv1.1/KCNA1 and Kv1.3/KCNA3. The polypeptide is Kappa-conotoxin-like 1 (Conus vexillum (Flag cone)).